Reading from the N-terminus, the 629-residue chain is Polyadenylate-binding protein 2 (629 aa).

Over residues 1 to 12 (MAQVQLQGQTPN) the composition is skewed to polar residues. Residues 1–25 (MAQVQLQGQTPNGSTAAVTSAPATS) are disordered. Over residues 13–25 (GSTAAVTSAPATS) the composition is skewed to low complexity. 4 RRM domains span residues 36 to 114 (TSLY…YSHR), 124 to 201 (GNIF…PFLR), 215 to 292 (TNVY…RAQK), and 318 to 395 (SNLY…IAQR). The tract at residues 480–507 (PQQQRPGGGRRPGGIQHSQQQNPMMQQQ) is disordered. Residues 492–507 (GGIQHSQQQNPMMQQQ) are compositionally biased toward low complexity. Residues 539–616 (TIGALASNLS…AMDVLRSVAA (78 aa)) enclose the PABC domain.

The protein belongs to the polyadenylate-binding protein type-1 family. Interacts with eIF-iso4G. Interacts with ERD15/CID1 and CID7. Interacts with Turnip mosaic virus (TuMV) VPg-Pro and RNA-dependent RNA polymerase (RdRp). Expressed in all organs (at the protein level) but under distinct spatial and temporal regulation within each organ.

The protein resides in the cytoplasm. It localises to the nucleus. Its function is as follows. Binds the poly(A) tail of mRNA. Appears to be an important mediator of the multiple roles of the poly(A) tail in mRNA biogenesis, stability and translation. In the cytoplasm, affects both translation and mRNA decay. Stimulates translation by interaction with translation initiation factor eIF4G, a subunit of the cap-binding complex eIF4F, bringing the 5'- and 3'-ends of the mRNA in proximity. The formation of this circular mRNP structure appears to be critical for the synergistic effects of the cap and the poly(A) tail in facilitating translation initiation, recycling of ribosomes, and mRNA stability. During infection with potyvirus TuMV, acts as a potential integral component of the viral replicase complex that could play an important role in the regulation of potyviral RNA-dependent RNA polymerase (RdRp). Binds to uridylated mRNAs and determines the size of uridine extensions. Limits uridine extension by URT1, likely by binding to the oligo(A) tail and preventing URT1 access. The sequence is that of Polyadenylate-binding protein 2 (PAB2) from Arabidopsis thaliana (Mouse-ear cress).